The primary structure comprises 135 residues: Interleukin-4 (135 aa).

The first 24 residues, M1–G24, serve as a signal peptide directing secretion. Disulfide bonds link C27–C135, C48–C85, and C70–C105. N-linked (GlcNAc...) asparagine glycosylation is found at N62 and N96.

This sequence belongs to the IL-4/IL-13 family.

It is found in the secreted. Functionally, participates in at least several B-cell activation processes as well as of other cell types. It is a costimulator of DNA-synthesis. It induces the expression of class II MHC molecules on resting B-cells. It enhances both secretion and cell surface expression of IgE and IgG1. It also regulates the expression of the low affinity Fc receptor for IgE (CD23) on both lymphocytes and monocytes. Positively regulates IL31RA expression in macrophages. Stimulates autophagy in dendritic cells by interfering with mTORC1 signaling and through the induction of RUFY4. This chain is Interleukin-4 (IL4), found in Capra hircus (Goat).